The sequence spans 323 residues: tRNA U34 carboxymethyltransferase (323 aa).

Carboxy-S-adenosyl-L-methionine is bound by residues K91, W105, K110, G130, 181–182 (IE), M196, Y200, and R315.

It belongs to the class I-like SAM-binding methyltransferase superfamily. CmoB family. In terms of assembly, homotetramer.

The catalysed reaction is carboxy-S-adenosyl-L-methionine + 5-hydroxyuridine(34) in tRNA = 5-carboxymethoxyuridine(34) in tRNA + S-adenosyl-L-homocysteine + H(+). Functionally, catalyzes carboxymethyl transfer from carboxy-S-adenosyl-L-methionine (Cx-SAM) to 5-hydroxyuridine (ho5U) to form 5-carboxymethoxyuridine (cmo5U) at position 34 in tRNAs. In Serratia proteamaculans (strain 568), this protein is tRNA U34 carboxymethyltransferase.